Here is a 312-residue protein sequence, read N- to C-terminus: Olfactory receptor 8H3 (312 aa).

Topologically, residues 1-26 are extracellular; it reads MMGRRNDTNVADFILTGLSDSEEVQM. N-linked (GlcNAc...) asparagine glycosylation is present at Asn-6. A helical membrane pass occupies residues 27–47; the sequence is ALFMLFLLIYLITMLGNVGML. Residues 48 to 55 are Cytoplasmic-facing; that stretch reads LIIRLDLQ. Residues 56–76 form a helical membrane-spanning segment; sequence LHTPMYFFLTHLSFIDLSYST. At 77 to 99 the chain is on the extracellular side; that stretch reads VVTPKTLANLLTSNYISFTGCFA. A disulfide bridge connects residues Cys-97 and Cys-189. Residues 100–120 form a helical membrane-spanning segment; sequence QMFCFVFLGTAECYLLSSMAY. Topologically, residues 121-139 are cytoplasmic; sequence DRYAAICSPLHYTVIMPKR. A helical membrane pass occupies residues 140-160; sequence LCLALITGPYVIGFMDSFVNV. Residues 161–197 lie on the Extracellular side of the membrane; that stretch reads VSMSRLHFCDSNIIHHFFCDTSPILALSCTDTDNTEM. The chain crosses the membrane as a helical span at residues 198-217; sequence LIFIIAGSTLMVSLITISAS. Over 218-237 the chain is Cytoplasmic; sequence YVSILSTILKINSTSGKQKA. Residues 238–258 traverse the membrane as a helical segment; sequence FSTCVSHLLGVTIFYGTMIFT. The Extracellular segment spans residues 259-271; the sequence is YLKPRKSYSLGRD. The chain crosses the membrane as a helical span at residues 272–292; sequence QVAPVFYTIVIPMLNPLIYSL. Over 293 to 312 the chain is Cytoplasmic; it reads RNREVKNALIRVMQRRQDSR.

The protein belongs to the G-protein coupled receptor 1 family.

Its subcellular location is the cell membrane. Its function is as follows. Odorant receptor. This is Olfactory receptor 8H3 (OR8H3) from Homo sapiens (Human).